Reading from the N-terminus, the 335-residue chain is Histidinol-phosphate aminotransferase (335 aa).

K202 bears the N6-(pyridoxal phosphate)lysine mark.

This sequence belongs to the class-II pyridoxal-phosphate-dependent aminotransferase family. Histidinol-phosphate aminotransferase subfamily. Homodimer. Pyridoxal 5'-phosphate is required as a cofactor.

It carries out the reaction L-histidinol phosphate + 2-oxoglutarate = 3-(imidazol-4-yl)-2-oxopropyl phosphate + L-glutamate. It participates in amino-acid biosynthesis; L-histidine biosynthesis; L-histidine from 5-phospho-alpha-D-ribose 1-diphosphate: step 7/9. The chain is Histidinol-phosphate aminotransferase from Thermotoga sp. (strain RQ2).